The primary structure comprises 175 residues: O-acetyl-ADP-ribose deacetylase (175 aa).

Residues 1–175 (MAVQPEVILG…IYRRLLASYP (175 aa)) form the Macro domain. Substrate contacts are provided by residues 11 to 12 (DI), asparagine 25, 33 to 35 (GVD), and 122 to 126 (STGVY). Catalysis depends on aspartate 35, which acts as the Proton acceptor.

It belongs to the MacroD-type family. YmdB subfamily. In terms of assembly, homodimer. Interacts with RNase III.

It catalyses the reaction 3''-O-acetyl-ADP-D-ribose + H2O = ADP-D-ribose + acetate + H(+). It carries out the reaction 2''-O-acetyl-ADP-D-ribose + H2O = ADP-D-ribose + acetate + H(+). Its function is as follows. Deacetylates O-acetyl-ADP ribose to yield ADP-ribose and free acetate. Down-regulates ribonuclease 3 (RNase III) activity. Acts by interacting directly with the region of the ribonuclease that is required for dimerization/activation. The protein is O-acetyl-ADP-ribose deacetylase of Klebsiella pneumoniae (strain 342).